The sequence spans 233 residues: MSEKFPPLEDQNIDFTPNDKKDDDTDFLKREAEILGDEFKTEQDDILETEASPAKDDDEIRDFEEQFPDINSANGAVSSDQNGSATVSSGNDNGEADDDFSTFEGANQSTESVKEDRSEVVDQWKQRRAVEIHEKDLKDEELKKELQDEAIKHIDDFYDSYNKKKEQQLEDAAKEAEAFLKKRDEFFGQDNTTWDRALQLINQDDADIIGGRDRSKLKEILLRLKGNAKAPGA.

The segment at 1-124 (MSEKFPPLED…EDRSEVVDQW (124 aa)) is disordered. A compositionally biased stretch (basic and acidic residues) spans 17-43 (PNDKKDDDTDFLKREAEILGDEFKTEQ). Threonine 49 carries the phosphothreonine modification. At serine 52 the chain carries Phosphoserine. A compositionally biased stretch (acidic residues) spans 56 to 67 (DDDEIRDFEEQF). The segment covering 69–92 (DINSANGAVSSDQNGSATVSSGND) has biased composition (polar residues). Positions 112–124 (SVKEDRSEVVDQW) are enriched in basic and acidic residues. Residues 125 to 186 (KQRRAVEIHE…EAFLKKRDEF (62 aa)) adopt a coiled-coil conformation. The segment at 144 to 204 (KELQDEAIKH…DRALQLINQD (61 aa)) is involved in binding clathrin heavy chain.

The protein belongs to the clathrin light chain family. In terms of assembly, clathrin coats are formed from molecules containing 3 heavy chains and 3 light chains. Interacts with the auxilin-like clathrin uncoating factor SWA2.

It localises to the cytoplasmic vesicle membrane. The protein resides in the membrane. It is found in the coated pit. Its function is as follows. Clathrin is the major protein of the polyhedral coat of coated pits and vesicles. In yeast, it is involved in the retention of proteins in an intracellular membrane compartment, presumably the trans-Golgi. The yeast light chain is important for cell growth. The light chain may help to properly orient the assembly/ disassembly of the clathrin coats. This is Clathrin light chain (CLC1) from Saccharomyces cerevisiae (strain ATCC 204508 / S288c) (Baker's yeast).